The primary structure comprises 949 residues: Bifunctional glutamine synthetase adenylyltransferase/adenylyl-removing enzyme (949 aa).

The segment at 1-450 (MQNQGNKVLS…HFNATVGGTD (450 aa)) is adenylyl removase. Residues 455-949 (NDHWTALFWN…IEIYNEILAI (495 aa)) form an adenylyl transferase region.

It belongs to the GlnE family. Mg(2+) serves as cofactor.

It catalyses the reaction [glutamine synthetase]-O(4)-(5'-adenylyl)-L-tyrosine + phosphate = [glutamine synthetase]-L-tyrosine + ADP. The catalysed reaction is [glutamine synthetase]-L-tyrosine + ATP = [glutamine synthetase]-O(4)-(5'-adenylyl)-L-tyrosine + diphosphate. Its function is as follows. Involved in the regulation of glutamine synthetase GlnA, a key enzyme in the process to assimilate ammonia. When cellular nitrogen levels are high, the C-terminal adenylyl transferase (AT) inactivates GlnA by covalent transfer of an adenylyl group from ATP to specific tyrosine residue of GlnA, thus reducing its activity. Conversely, when nitrogen levels are low, the N-terminal adenylyl removase (AR) activates GlnA by removing the adenylyl group by phosphorolysis, increasing its activity. The regulatory region of GlnE binds the signal transduction protein PII (GlnB) which indicates the nitrogen status of the cell. In Shewanella frigidimarina (strain NCIMB 400), this protein is Bifunctional glutamine synthetase adenylyltransferase/adenylyl-removing enzyme.